The sequence spans 476 residues: Chromosomal replication initiator protein DnaA (476 aa).

Residues 1-75 are domain I, interacts with DnaA modulators; that stretch reads MLAPDTFWLA…TQMAENHFAR (75 aa). Residues 75–139 form a domain II region; that stretch reads RPVQLQLELA…AKEKQEKNPT (65 aa). The tract at residues 110–141 is disordered; sequence FDAPTESAQKAPKDTKDTKDAKEKQEKNPTRL. The span at 120-138 shows a compositional bias: basic and acidic residues; the sequence is APKDTKDTKDAKEKQEKNP. The tract at residues 140-356 is domain III, AAA+ region; the sequence is RLNPSFTFNT…GALKRVVAYS (217 aa). Gly-184, Gly-186, Lys-187, and Thr-188 together coordinate ATP. Positions 357 to 476 are domain IV, binds dsDNA; the sequence is RFTGHALTLD…FNTLLHILRG (120 aa).

Belongs to the DnaA family. As to quaternary structure, oligomerizes as a right-handed, spiral filament on DNA at oriC.

It is found in the cytoplasm. Functionally, plays an essential role in the initiation and regulation of chromosomal replication. ATP-DnaA binds to the origin of replication (oriC) to initiate formation of the DNA replication initiation complex once per cell cycle. Binds the DnaA box (a 9 base pair repeat at the origin) and separates the double-stranded (ds)DNA. Forms a right-handed helical filament on oriC DNA; dsDNA binds to the exterior of the filament while single-stranded (ss)DNA is stabiized in the filament's interior. The ATP-DnaA-oriC complex binds and stabilizes one strand of the AT-rich DNA unwinding element (DUE), permitting loading of DNA polymerase. After initiation quickly degrades to an ADP-DnaA complex that is not apt for DNA replication. Binds acidic phospholipids. This Nitrosospira multiformis (strain ATCC 25196 / NCIMB 11849 / C 71) protein is Chromosomal replication initiator protein DnaA.